An 842-amino-acid polypeptide reads, in one-letter code: Alanine--tRNA ligase (842 aa).

Residues H549, H553, C650, and H654 each contribute to the Zn(2+) site.

The protein belongs to the class-II aminoacyl-tRNA synthetase family. Zn(2+) serves as cofactor.

The protein resides in the cytoplasm. It carries out the reaction tRNA(Ala) + L-alanine + ATP = L-alanyl-tRNA(Ala) + AMP + diphosphate. Its function is as follows. Catalyzes the attachment of alanine to tRNA(Ala) in a two-step reaction: alanine is first activated by ATP to form Ala-AMP and then transferred to the acceptor end of tRNA(Ala). Also edits incorrectly charged Ser-tRNA(Ala) and Gly-tRNA(Ala) via its editing domain. This chain is Alanine--tRNA ligase, found in Campylobacter jejuni subsp. jejuni serotype O:6 (strain 81116 / NCTC 11828).